Consider the following 454-residue polypeptide: Ornithine aminotransferase (454 aa).

At Lys280 the chain carries N6-(pyridoxal phosphate)lysine.

Belongs to the class-III pyridoxal-phosphate-dependent aminotransferase family. Requires pyridoxal 5'-phosphate as cofactor.

Its subcellular location is the cytoplasm. The catalysed reaction is a 2-oxocarboxylate + L-ornithine = L-glutamate 5-semialdehyde + an L-alpha-amino acid. The protein operates within amino-acid biosynthesis; L-proline biosynthesis; L-glutamate 5-semialdehyde from L-ornithine: step 1/1. This Emericella nidulans (strain FGSC A4 / ATCC 38163 / CBS 112.46 / NRRL 194 / M139) (Aspergillus nidulans) protein is Ornithine aminotransferase (otaA).